Here is a 186-residue protein sequence, read N- to C-terminus: Elongation factor P (186 aa).

It belongs to the elongation factor P family.

It localises to the cytoplasm. Its pathway is protein biosynthesis; polypeptide chain elongation. In terms of biological role, involved in peptide bond synthesis. Stimulates efficient translation and peptide-bond synthesis on native or reconstituted 70S ribosomes in vitro. Probably functions indirectly by altering the affinity of the ribosome for aminoacyl-tRNA, thus increasing their reactivity as acceptors for peptidyl transferase. The polypeptide is Elongation factor P (Prochlorococcus marinus (strain MIT 9215)).